Here is a 659-residue protein sequence, read N- to C-terminus: 1,4-alpha-glucan branching enzyme GlgB 2 (659 aa).

Residues 1–26 (MRNYKELKHEKNGNVTEKIGENKGKS) are disordered. D337 (nucleophile) is an active-site residue. E390 (proton donor) is an active-site residue.

This sequence belongs to the glycosyl hydrolase 13 family. GlgB subfamily. As to quaternary structure, monomer.

It carries out the reaction Transfers a segment of a (1-&gt;4)-alpha-D-glucan chain to a primary hydroxy group in a similar glucan chain.. Its pathway is glycan biosynthesis; glycogen biosynthesis. Its function is as follows. Catalyzes the formation of the alpha-1,6-glucosidic linkages in glycogen by scission of a 1,4-alpha-linked oligosaccharide from growing alpha-1,4-glucan chains and the subsequent attachment of the oligosaccharide to the alpha-1,6 position. The polypeptide is 1,4-alpha-glucan branching enzyme GlgB 2 (Clostridium perfringens (strain SM101 / Type A)).